The sequence spans 184 residues: Protein GrpE (184 aa).

Positions 1 to 12 (MADEQLNEKDLN) are enriched in basic and acidic residues. The disordered stretch occupies residues 1 to 22 (MADEQLNEKDLNAEEAGAVDNG).

This sequence belongs to the GrpE family. As to quaternary structure, homodimer.

Its subcellular location is the cytoplasm. In terms of biological role, participates actively in the response to hyperosmotic and heat shock by preventing the aggregation of stress-denatured proteins, in association with DnaK and GrpE. It is the nucleotide exchange factor for DnaK and may function as a thermosensor. Unfolded proteins bind initially to DnaJ; upon interaction with the DnaJ-bound protein, DnaK hydrolyzes its bound ATP, resulting in the formation of a stable complex. GrpE releases ADP from DnaK; ATP binding to DnaK triggers the release of the substrate protein, thus completing the reaction cycle. Several rounds of ATP-dependent interactions between DnaJ, DnaK and GrpE are required for fully efficient folding. The protein is Protein GrpE of Pseudomonas putida (strain W619).